We begin with the raw amino-acid sequence, 80 residues long: Turripeptide VI/VII-01 (80 aa).

The N-terminal stretch at 1-22 (MRLQLILTITLLLTSFMGYRDA) is a signal peptide. Residues 23-36 (AVIQGKTERSAMKM) constitute a propeptide that is removed on maturation. Disulfide bonds link cysteine 48–cysteine 61, cysteine 50–cysteine 65, and cysteine 60–cysteine 70. Residues 77-80 (SSAI) constitute a propeptide that is removed on maturation.

Expressed by the venom duct.

It localises to the secreted. The sequence is that of Turripeptide VI/VII-01 from Gemmula speciosa (Splendid gem-turris).